The primary structure comprises 310 residues: Protein TIFY 6A (310 aa).

One can recognise a Tify domain in the interval 141-176 (SKPLPPQLTIFYAGSVLVYQDIAPEKAQAIMLLAGN). The Jas signature appears at 259-284 (PQTRKASLARFLEKRKERVINVSPYY). The short motif at 261-268 (TRKASLAR) is the Nuclear localization signal element.

This sequence belongs to the TIFY/JAZ family. In terms of assembly, homo- and heterodimer. Interacts with MYC2, AFPH2/NINJA, TIFY10A/JAZ1, TIFY6B/JAZ3, TIFY5A/JAZ8, TIFY9/JAZ10 and TIFY3A/JAZ11. Interacts with RHD6 and RSL1. In terms of processing, ubiquitinated. Targeted for degradation by the SCF(COI1) E3 ubiquitin ligase-proteasome pathway during jasmonate signaling.

It localises to the nucleus. Repressor of jasmonate responses. Interacts with and suppresses RHD6 and RSL1 transcription factor activities to negatively regulate jasmonate-stimulated root hair development. This Arabidopsis thaliana (Mouse-ear cress) protein is Protein TIFY 6A (TIFY6A).